A 956-amino-acid chain; its full sequence is RNA-silencing factor ers1 (956 aa).

It localises to the cytoplasm. It is found in the cytoskeleton. The protein localises to the microtubule organizing center. The protein resides in the spindle pole body. Its function is as follows. Involved in RNAi-dependent heterochromatin formation and centromeric silencing. Required for the conversion of centromeric pre-small interfering RNA transcripts into small interfering RNAs, histone H3 'Lys9' methylation, and the recruitment of the RITS complex to centromeric sequences. The chain is RNA-silencing factor ers1 (ers1) from Schizosaccharomyces pombe (strain 972 / ATCC 24843) (Fission yeast).